Consider the following 643-residue polypeptide: MPSRRKSPQFGHEMGAFTSARAREVLVALGQLAAAVVVAVGVAVVSLLAIARVEWPAFPSSNQLHALTTVGQVGCLAGLVGIGWLWRHGRFRRLARLGGLVLVSAFTVVTLGMPLGATKLYLFGISVDQQFRTEYLTRLTDTAALRDMTYIGLPPFYPPGWFWIGGRAAALTGTPAWEMFKPWAITSMAIAVAVALVLWWRMIRFEYALLVTVATAAVMLAYSSPEPYAAMITVLLPPMLVLTWSGLGARDRQGWAAVVGAGVFLGFAATWYTLLVAYGAFTVVLMALLLAGSRLQSGIKAAVDPLCRLAVVGAIAAAIGSTTWLPYLLRAARDPVSDTGSAQHYLPADGAALTFPMLQFSLLGAICLLGTLWLVMRARSSAPAGALAIGVLAVYLWSLLSMLATLARTTLLSFRLQPTLSVLLVAAGAFGFVEAVQALGKRGRGVIPMAAAIGLAGAIAFSQDIPDVLRPDLTIAYTDTDGYGQRGDRRPPGSEKYYPAIDAAIRRVTGKRRDRTVVLTADYSFLSYYPYWGFQGLTPHYANPLAQFDKRATQIDSWSGLSTADEFIAALDKLPWQPPTVFLMRHGAHNSYTLRLAQDVYPNQPNVRRYTVDLRTALFADPRFVVEDIGPFVLAIRKPQESA.

13 consecutive transmembrane segments (helical) span residues valine 25–valine 45, alanine 66–tryptophan 86, leucine 97–alanine 117, phenylalanine 180–tryptophan 200, phenylalanine 205–proline 225, alanine 229–alanine 249, tryptophan 255–tyrosine 272, valine 276–serine 293, leucine 309–leucine 329, phenylalanine 355–valine 375, alanine 384–alanine 404, leucine 420–glycine 440, and glycine 445–isoleucine 465. Residues proline 466 to alanine 643 lie on the Extracellular side of the membrane.

The protein belongs to the glycosyltransferase 85 family.

The protein resides in the cell membrane. The catalysed reaction is Adds an alpha-D-arabinofuranosyl group from trans,octacis-decaprenylphospho-beta-D-arabinofuranose at the 5-O-position of the eighth, tenth and twelfth galactofuranose unit of the galactofuranan chain of [beta-D-galactofuranosyl-(1-&gt;5)-beta-D-galactofuranosyl-(1-&gt;6)]14-beta-D-galactofuranosyl-(1-&gt;5)-beta-D-galactofuranosyl-(1-&gt;4)-alpha-L-rhamnopyranosyl-(1-&gt;3)-N-acetyl-alpha-D-glucosaminyl-diphospho-trans,octacis-decaprenol.. It functions in the pathway cell wall biogenesis; cell wall polysaccharide biosynthesis. Functionally, involved in the biosynthesis of the arabinogalactan (AG) region of the mycolylarabinogalactan-peptidoglycan (mAGP) complex, an essential component of the mycobacterial cell wall. Catalyzes the addition of the first key arabinofuranosyl (Araf) residue from the sugar donor decaprenyl-phospho-arabinose (DPA) on the C-5 of a 6-linked galactofuranosyl (Galf) of the galactan domain, thus 'priming' the galactan for further elaboration by other arabinofuranosyltransferases. It is not able to add an Araf residue to a terminal Galf. This Mycobacterium tuberculosis (strain CDC 1551 / Oshkosh) protein is Galactan 5-O-arabinofuranosyltransferase.